The chain runs to 268 residues: Zinc transporter ZupT (268 aa).

The next 8 helical transmembrane spans lie at 5-25, 36-56, 75-95, 124-144, 157-177, 187-207, 211-231, and 248-268; these read ILFA…GSLI, VLTI…MIEI, VVTV…DKLI, MGLF…LATF, IAVA…APIF, FILS…GYFL, FFSP…MVYI, and FAIG…LLFT. Asn136 and Glu139 together coordinate Fe(2+). Zn(2+) is bound by residues Glu139 and His164. Residues Asn165, Glu168, and Glu197 each contribute to the Fe(2+) site. Glu168 provides a ligand contact to Zn(2+).

The protein belongs to the ZIP transporter (TC 2.A.5) family. ZupT subfamily.

The protein resides in the cell membrane. It catalyses the reaction Zn(2+)(in) = Zn(2+)(out). Functionally, mediates zinc uptake. May also transport other divalent cations. The chain is Zinc transporter ZupT from Chlorobium chlorochromatii (strain CaD3).